Reading from the N-terminus, the 301-residue chain is tRNA dimethylallyltransferase (301 aa).

9–16 (GPTASGKS) is a binding site for ATP. Residue 11–16 (TASGKS) participates in substrate binding. The tract at residues 34–37 (DSMQ) is interaction with substrate tRNA.

It belongs to the IPP transferase family. As to quaternary structure, monomer. Mg(2+) is required as a cofactor.

It carries out the reaction adenosine(37) in tRNA + dimethylallyl diphosphate = N(6)-dimethylallyladenosine(37) in tRNA + diphosphate. Catalyzes the transfer of a dimethylallyl group onto the adenine at position 37 in tRNAs that read codons beginning with uridine, leading to the formation of N6-(dimethylallyl)adenosine (i(6)A). The protein is tRNA dimethylallyltransferase of Corynebacterium efficiens (strain DSM 44549 / YS-314 / AJ 12310 / JCM 11189 / NBRC 100395).